The primary structure comprises 311 residues: Tyrosine recombinase XerD (311 aa).

The Core-binding (CB) domain occupies 3 to 88; sequence DMSAAYVEAF…ALRQFYKFLY (86 aa). The region spanning 109–298 is the Tyr recombinase domain; that stretch reads TLPKTLSIED…LEERLHDLVQ (190 aa). Residues Arg-156, Lys-180, His-250, Arg-253, and His-276 contribute to the active site. Catalysis depends on Tyr-285, which acts as the O-(3'-phospho-DNA)-tyrosine intermediate.

It belongs to the 'phage' integrase family. XerD subfamily. In terms of assembly, forms a cyclic heterotetrameric complex composed of two molecules of XerC and two molecules of XerD.

It localises to the cytoplasm. Site-specific tyrosine recombinase, which acts by catalyzing the cutting and rejoining of the recombining DNA molecules. The XerC-XerD complex is essential to convert dimers of the bacterial chromosome into monomers to permit their segregation at cell division. It also contributes to the segregational stability of plasmids. The polypeptide is Tyrosine recombinase XerD (Rhizobium meliloti (strain 1021) (Ensifer meliloti)).